The chain runs to 258 residues: Acetylglutamate kinase (258 aa).

Substrate contacts are provided by residues 44–45 (GG), Arg66, and Asn158. Residues 181–186 (DVSGIL) and 209–211 (IIT) each bind ATP.

This sequence belongs to the acetylglutamate kinase family. ArgB subfamily. As to quaternary structure, homodimer.

It is found in the cytoplasm. The catalysed reaction is N-acetyl-L-glutamate + ATP = N-acetyl-L-glutamyl 5-phosphate + ADP. It participates in amino-acid biosynthesis; L-arginine biosynthesis; N(2)-acetyl-L-ornithine from L-glutamate: step 2/4. Catalyzes the ATP-dependent phosphorylation of N-acetyl-L-glutamate. This chain is Acetylglutamate kinase, found in Citrobacter koseri (strain ATCC BAA-895 / CDC 4225-83 / SGSC4696).